The primary structure comprises 242 residues: Floral homeotic protein AGAMOUS (242 aa).

The 55-residue stretch at 19–73 (RGKIEIKRIENTTNRQVTFCKRRNGLLKKAYELSVLCDAEVALIVFSTRGRLYEY) folds into the MADS-box domain. A K-box domain is found at 103–193 (AQFYQQEASK…RAKIAENERA (91 aa)).

In terms of tissue distribution, flower. Preferentially expressed in stamen and carpel and weakly in petal. Undetected in leaves and roots.

It is found in the nucleus. Its function is as follows. Probable transcription factor involved in regulating genes that determines stamen and carpel development in wild-type flowers. This is Floral homeotic protein AGAMOUS (AG2) from Panax ginseng (Korean ginseng).